The following is a 570-amino-acid chain: AT-rich interactive domain-containing protein 3A (570 aa).

A disordered region spans residues 102-215 (AGVPNSSSGH…LAPQAQSQHH (114 aa)). Over residues 120–160 (DIDDEDDEDDDPELDRGMDDEERDMDEDDSMNEGGGDEDLE) the composition is skewed to acidic residues. Serine 179 carries the phosphoserine modification. The 93-residue stretch at 232 to 324 (DEKRKEFLDD…YLYPYECEKR (93 aa)) folds into the ARID domain. Position 356 is a phosphoserine (serine 356). Residues 429 to 523 (AALEQLREKL…GVLFARKPAI (95 aa)) form the REKLES domain. The interval 430-473 (ALEQLREKLESGEPPEKKVMLMAEEQQRIMQHALQQNLFAMATQ) is important for nuclear localization. The homodimerization stretch occupies residues 475 to 495 (PMNIKLNNRDDRQETALNLST). The interval 519–531 (RKPAIGFMPSSQR) is important for cytoplasmic localization. The disordered stretch occupies residues 528–570 (SSQRVHHQHSSQGKSNSPGLSSHIQPSSSASSSASSHGPATSP). Residues serine 542 and serine 569 each carry the phosphoserine modification. Positions 548 to 570 (SSHIQPSSSASSSASSHGPATSP) are enriched in low complexity.

In terms of assembly, homodimer.

The protein resides in the nucleus. Its subcellular location is the cytoplasm. In terms of biological role, transcription factor. This Danio rerio (Zebrafish) protein is AT-rich interactive domain-containing protein 3A (arid3a).